The chain runs to 278 residues: Energy-coupling factor transporter ATP-binding protein EcfA (278 aa).

Residues 5 to 240 (LETKNLVYNY…KEVIDEADLR (236 aa)) form the ABC transporter domain. 38–45 (GHNGAGKS) serves as a coordination point for ATP.

Belongs to the ABC transporter superfamily. Energy-coupling factor EcfA family. In terms of assembly, forms a stable energy-coupling factor (ECF) transporter complex composed of 2 membrane-embedded substrate-binding proteins (S component), 2 ATP-binding proteins (A component) and 2 transmembrane proteins (T component).

The protein localises to the cell membrane. Its function is as follows. ATP-binding (A) component of a common energy-coupling factor (ECF) ABC-transporter complex. Unlike classic ABC transporters this ECF transporter provides the energy necessary to transport a number of different substrates. This Methanosphaera stadtmanae (strain ATCC 43021 / DSM 3091 / JCM 11832 / MCB-3) protein is Energy-coupling factor transporter ATP-binding protein EcfA.